The chain runs to 68 residues: ATP-dependent 6-phosphofructokinase (68 aa).

17–20 (GDGT) contributes to the ATP binding site. Mg(2+) is bound at residue Asp-18. The Proton acceptor role is filled by Asp-48.

It belongs to the phosphofructokinase type A (PFKA) family. PPi-dependent PFK group II subfamily. Atypical ATP-dependent clade 'X' sub-subfamily. In terms of assembly, homotetramer. Requires Mg(2+) as cofactor.

The protein resides in the cytoplasm. The catalysed reaction is beta-D-fructose 6-phosphate + ATP = beta-D-fructose 1,6-bisphosphate + ADP + H(+). The protein operates within carbohydrate degradation; glycolysis; D-glyceraldehyde 3-phosphate and glycerone phosphate from D-glucose: step 3/4. Its activity is regulated as follows. Allosterically activated by AMP. Catalyzes the phosphorylation of D-fructose 6-phosphate to fructose 1,6-bisphosphate by ATP, the first committing step of glycolysis. In Triticum aestivum (Wheat), this protein is ATP-dependent 6-phosphofructokinase (PFK).